Here is a 246-residue protein sequence, read N- to C-terminus: 1-(5-phosphoribosyl)-5-[(5-phosphoribosylamino)methylideneamino] imidazole-4-carboxamide isomerase (246 aa).

Asp-8 functions as the Proton acceptor in the catalytic mechanism. Residue Asp-131 is the Proton donor of the active site.

This sequence belongs to the HisA/HisF family.

It localises to the cytoplasm. It catalyses the reaction 1-(5-phospho-beta-D-ribosyl)-5-[(5-phospho-beta-D-ribosylamino)methylideneamino]imidazole-4-carboxamide = 5-[(5-phospho-1-deoxy-D-ribulos-1-ylimino)methylamino]-1-(5-phospho-beta-D-ribosyl)imidazole-4-carboxamide. It participates in amino-acid biosynthesis; L-histidine biosynthesis; L-histidine from 5-phospho-alpha-D-ribose 1-diphosphate: step 4/9. The sequence is that of 1-(5-phosphoribosyl)-5-[(5-phosphoribosylamino)methylideneamino] imidazole-4-carboxamide isomerase from Chromobacterium violaceum (strain ATCC 12472 / DSM 30191 / JCM 1249 / CCUG 213 / NBRC 12614 / NCIMB 9131 / NCTC 9757 / MK).